The chain runs to 275 residues: ATP synthase subunit delta (275 aa).

It belongs to the ATPase delta chain family. As to quaternary structure, F-type ATPases have 2 components, F(1) - the catalytic core - and F(0) - the membrane proton channel. F(1) has five subunits: alpha(3), beta(3), gamma(1), delta(1), epsilon(1). F(0) has three main subunits: a(1), b(2) and c(10-14). The alpha and beta chains form an alternating ring which encloses part of the gamma chain. F(1) is attached to F(0) by a central stalk formed by the gamma and epsilon chains, while a peripheral stalk is formed by the delta and b chains.

It is found in the cell membrane. Functionally, f(1)F(0) ATP synthase produces ATP from ADP in the presence of a proton or sodium gradient. F-type ATPases consist of two structural domains, F(1) containing the extramembraneous catalytic core and F(0) containing the membrane proton channel, linked together by a central stalk and a peripheral stalk. During catalysis, ATP synthesis in the catalytic domain of F(1) is coupled via a rotary mechanism of the central stalk subunits to proton translocation. In terms of biological role, this protein is part of the stalk that links CF(0) to CF(1). It either transmits conformational changes from CF(0) to CF(1) or is implicated in proton conduction. This chain is ATP synthase subunit delta, found in Nocardioides sp. (strain ATCC BAA-499 / JS614).